We begin with the raw amino-acid sequence, 135 residues long: MAGRGKAIGAGAAKKATSRSSKGGLQFPVGRIARFLKAGKYAERVGAGAPVYLAAVLEYLAAEVLELAGNAARDNKKTRIVPRHIQLAVRNDEELTKLLGGATIASGGVMPNIHQHLLPKKAGSSKASHADDDDN.

The protein belongs to the histone H2A family. The nucleosome is a histone octamer containing two molecules each of H2A, H2B, H3 and H4 assembled in one H3-H4 heterotetramer and two H2A-H2B heterodimers. The octamer wraps approximately 147 bp of DNA.

Its subcellular location is the nucleus. It localises to the chromosome. In terms of biological role, core component of nucleosome. Nucleosomes wrap and compact DNA into chromatin, limiting DNA accessibility to the cellular machineries which require DNA as a template. Histones thereby play a central role in transcription regulation, DNA repair, DNA replication and chromosomal stability. DNA accessibility is regulated via a complex set of post-translational modifications of histones, also called histone code, and nucleosome remodeling. The protein is Probable histone H2A.8 of Oryza sativa subsp. indica (Rice).